Here is a 175-residue protein sequence, read N- to C-terminus: Arginine repressor (175 aa).

A disordered region spans residues 1 to 23 (MSVSTPERGGAEQGKGPAIARTR).

The protein belongs to the ArgR family.

The protein resides in the cytoplasm. It participates in amino-acid biosynthesis; L-arginine biosynthesis [regulation]. Its function is as follows. Regulates arginine biosynthesis genes. The protein is Arginine repressor of Nocardia farcinica (strain IFM 10152).